Here is a 115-residue protein sequence, read N- to C-terminus: MNIEILASKIHRAVVTDANLNYVGSISIGEELIKAANLIENQKVEILDINNGERFATYVIKGKKGEICLNGAAARKVCVGDVVIIVAYASMKFKKAKKFKPTIVHVNNKNEIIKE.

The Schiff-base intermediate with substrate; via pyruvic acid role is filled by Ser25. Pyruvic acid (Ser) is present on Ser25. Position 57 (Thr57) interacts with substrate. The active-site Proton donor is the Tyr58. 71–73 (GAA) is a substrate binding site.

It belongs to the PanD family. As to quaternary structure, heterooctamer of four alpha and four beta subunits. Requires pyruvate as cofactor. Post-translationally, is synthesized initially as an inactive proenzyme, which is activated by self-cleavage at a specific serine bond to produce a beta-subunit with a hydroxyl group at its C-terminus and an alpha-subunit with a pyruvoyl group at its N-terminus.

It localises to the cytoplasm. It catalyses the reaction L-aspartate + H(+) = beta-alanine + CO2. Its pathway is cofactor biosynthesis; (R)-pantothenate biosynthesis; beta-alanine from L-aspartate: step 1/1. In terms of biological role, catalyzes the pyruvoyl-dependent decarboxylation of aspartate to produce beta-alanine. This Campylobacter concisus (strain 13826) protein is Aspartate 1-decarboxylase.